The following is a 185-amino-acid chain: MIQTIDLKKGMVFEKDGKLLKVLAINHHKPGKGNTLMQMDIQDVRSGSIVHTTMRPSEKVEQVMVNKKNAQYLYDEGNTSVFMDLETYEQYEIDQSQISEEKKYLTENMQVQMNFVDSELVGVELPATVTLEVVETQPEIKGATIDGGGKPATMNTGLVVTVPSFVKNGDKIIVNTSDGAYKSRA.

This sequence belongs to the elongation factor P family.

It localises to the cytoplasm. It participates in protein biosynthesis; polypeptide chain elongation. Its function is as follows. Involved in peptide bond synthesis. Stimulates efficient translation and peptide-bond synthesis on native or reconstituted 70S ribosomes in vitro. Probably functions indirectly by altering the affinity of the ribosome for aminoacyl-tRNA, thus increasing their reactivity as acceptors for peptidyl transferase. The chain is Elongation factor P from Limosilactobacillus fermentum (strain NBRC 3956 / LMG 18251) (Lactobacillus fermentum).